A 603-amino-acid chain; its full sequence is Glutathione-regulated potassium-efflux system protein KefB (603 aa).

The next 13 helical transmembrane spans lie at 5 to 25, 29 to 49, 53 to 73, 87 to 107, 115 to 135, 152 to 172, 180 to 202, 207 to 227, 230 to 250, 268 to 288, 291 to 311, 326 to 346, and 356 to 376; these read ALLT…PIAA, IGAV…GLGF, VEAI…IIGL, IFGV…GALY, SALI…LQLM, VLLF…ILAG, WERI…YLVR, FIAA…LVLG, LFME…GILL, GLLL…GILY, IVKI…VLYF, FAGV…AAAS, and PLLL…MQVI. The region spanning 400 to 521 is the RCK N-terminal domain; that stretch reads EPQVIVVGFG…VRHFSRETFS (122 aa).

Belongs to the monovalent cation:proton antiporter 2 (CPA2) transporter (TC 2.A.37) family. KefB subfamily. Interacts with the regulatory subunit KefG.

Its subcellular location is the cell inner membrane. Functionally, pore-forming subunit of a potassium efflux system that confers protection against electrophiles. Catalyzes K(+)/H(+) antiport. This Pectobacterium atrosepticum (strain SCRI 1043 / ATCC BAA-672) (Erwinia carotovora subsp. atroseptica) protein is Glutathione-regulated potassium-efflux system protein KefB.